A 183-amino-acid chain; its full sequence is MIIKKPENFNEQIEQFGKCLEKFNKIHSITNYNDLSAVIEDSLEGLKFITEMPKVAIDIGSGAGFPAIFLAMVLPYTKWHLFEPNTKKAAFLTYAKVNLKLKNIIIHNTKIENETPFIADLITSRAVMKVPDLIKISHGFFDTHTKFLFYKGSNVKDELGNLKAEIFENNMRKYALLKGNDVC.

S-adenosyl-L-methionine is bound by residues Gly60, Phe65, 111-112 (IE), and Arg125.

Belongs to the methyltransferase superfamily. RNA methyltransferase RsmG family.

It is found in the cytoplasm. The catalysed reaction is guanosine(527) in 16S rRNA + S-adenosyl-L-methionine = N(7)-methylguanosine(527) in 16S rRNA + S-adenosyl-L-homocysteine. In terms of biological role, specifically methylates the N7 position of guanine in position 527 of 16S rRNA. The sequence is that of Ribosomal RNA small subunit methyltransferase G from Campylobacter hominis (strain ATCC BAA-381 / DSM 21671 / CCUG 45161 / LMG 19568 / NCTC 13146 / CH001A).